Reading from the N-terminus, the 283-residue chain is Quinate/shikimate dehydrogenase (NAD(+)) (283 aa).

Residues serine 17, threonine 69, lysine 73, asparagine 94, and aspartate 110 each contribute to the shikimate site. L-quinate-binding positions include 17–19, threonine 69, lysine 73, asparagine 94, and aspartate 110; that span reads SRT. The active-site Proton acceptor is the lysine 73. NAD(+) contacts are provided by residues 137–138, aspartate 158, arginine 163, 203–206, alanine 213, valine 228, and glycine 251; these read GV and PMGM. Glutamine 258 contributes to the shikimate binding site. An L-quinate-binding site is contributed by glutamine 258.

Belongs to the shikimate dehydrogenase family. Homodimer.

The catalysed reaction is L-quinate + NAD(+) = 3-dehydroquinate + NADH + H(+). It carries out the reaction shikimate + NAD(+) = 3-dehydroshikimate + NADH + H(+). It participates in metabolic intermediate biosynthesis; chorismate biosynthesis; chorismate from D-erythrose 4-phosphate and phosphoenolpyruvate: step 4/7. It functions in the pathway aromatic compound metabolism; 3,4-dihydroxybenzoate biosynthesis; 3-dehydroquinate from D-quinate (NAD(+) route). In terms of biological role, involved in the biosynthesis of the chorismate, which leads to the biosynthesis of aromatic amino acids, and plays a key role in the quinate degradation pathway. Catalyzes the NAD(+)-dependent oxidation of both quinate and shikimate to 3-dehydroquinate and 3-dehydroshikimate, respectively. This Corynebacterium glutamicum (strain R) protein is Quinate/shikimate dehydrogenase (NAD(+)).